The primary structure comprises 366 residues: MAARQQQKGTGFGVQYEDFVPKSEWKDQPEATILNIDLTGFAKEQMKVTYVHSSKMIRVTGERPLANRKWNRFNEVFTVPQNCLVDKIHGSFKKNVLTITMPKETITKVAYLPETSRTEAAALEKAAKLEEKRLLEESRRKEKEEEEAKQMKKQLLEEKEALIRKLQEEAKAKEEAEMRKLQEEAKANEEAAAKKLQEEIEAKEKLEERKLEERRLEERKLEDMKLAEEAKLKKIQERKSVDESGEKEKILKPEVVYTKSGHVATPKPESGSGLKSGFGGVGEVVKSAEEKLGNLVEKEKKMGKGIMEKIRRKEITSEEKKLMMNVGVAALVIFALGAYVSYTFCSSSSSSSSSSPSSSSSSTKPE.

One can recognise a sHSP domain in the interval 14 to 121; that stretch reads VQYEDFVPKS…LPETSRTEAA (108 aa). The stretch at 129–133 is one A-1 repeat; the sequence is LEEKR. The segment at 129-220 is 6 X 5 AA repeats A of L-E-E-[SKR]-[ERK]; the sequence is LEEKRLLEES…LEERRLEERK (92 aa). The A-2 repeat unit spans residues 135–139; it reads LEESR. One copy of the A-3 repeat lies at 156–160; the sequence is LEEKE. The B-1 repeat unit spans residues 163 to 176; it reads IRKLQEEAKAKEEA. Residues 163-206 are 3 X 14 AA repeats B of [IMA]-[RK]-K-L-Q-E-E-A-K-A-K-E-[EK]-[LA]; sequence IRKLQEEAKAKEEAEMRKLQEEAKANEEAAAKKLQEEIEAKEKL. The B-2 repeat unit spans residues 178 to 191; that stretch reads MRKLQEEAKANEEA. The stretch at 193 to 205 is one B-3 repeat; it reads AKKLQEEIEAKEK. Residues 206-210 form an A-4 repeat; it reads LEERK. One copy of the A-5 repeat lies at 211 to 215; the sequence is LEERR. The stretch at 216–220 is one A-6 repeat; sequence LEERK. The helical transmembrane segment at 322 to 342 threads the bilayer; it reads LMMNVGVAALVIFALGAYVSY. The interval 345–366 is disordered; the sequence is CSSSSSSSSSSPSSSSSSTKPE. Low complexity predominate over residues 346 to 366; that stretch reads SSSSSSSSSSPSSSSSSTKPE.

This sequence belongs to the small heat shock protein (HSP20) family.

It localises to the cell membrane. Its function is as follows. Seems to not be involved in heat resistance. Unable to mediate restriction of long-distance movement of the pathogenic tobacco etch virus (TEV) without causing a hypersensitive response or inducing systemic acquired resistance. The sequence is that of Inactive protein RESTRICTED TEV MOVEMENT 2 (RTM2) from Arabidopsis thaliana (Mouse-ear cress).